The sequence spans 359 residues: Putative mannose-1-phosphate guanyltransferase (359 aa).

This sequence belongs to the transferase hexapeptide repeat family.

The enzyme catalyses alpha-D-mannose 1-phosphate + GTP + H(+) = GDP-alpha-D-mannose + diphosphate. In Sulfolobus acidocaldarius (strain ATCC 33909 / DSM 639 / JCM 8929 / NBRC 15157 / NCIMB 11770), this protein is Putative mannose-1-phosphate guanyltransferase (mpg1).